The sequence spans 344 residues: Anthranilate phosphoribosyltransferase (344 aa).

5-phospho-alpha-D-ribose 1-diphosphate-binding positions include glycine 86, 89–90 (GD), threonine 94, 96–99 (NIST), 114–122 (KHGNKSASG), and serine 126. Position 86 (glycine 86) interacts with anthranilate. Serine 98 serves as a coordination point for Mg(2+). Asparagine 117 lines the anthranilate pocket. An anthranilate-binding site is contributed by arginine 172. Mg(2+) contacts are provided by aspartate 231 and glutamate 232.

It belongs to the anthranilate phosphoribosyltransferase family. As to quaternary structure, homodimer. Mg(2+) is required as a cofactor.

It carries out the reaction N-(5-phospho-beta-D-ribosyl)anthranilate + diphosphate = 5-phospho-alpha-D-ribose 1-diphosphate + anthranilate. It functions in the pathway amino-acid biosynthesis; L-tryptophan biosynthesis; L-tryptophan from chorismate: step 2/5. In terms of biological role, catalyzes the transfer of the phosphoribosyl group of 5-phosphorylribose-1-pyrophosphate (PRPP) to anthranilate to yield N-(5'-phosphoribosyl)-anthranilate (PRA). In Prochlorococcus marinus (strain AS9601), this protein is Anthranilate phosphoribosyltransferase.